The primary structure comprises 160 residues: MKVTLLLLLIAVLLLLLIFMKVCKQKCIEGIEFEIKNNVKKSLDKKIKDKKSVSKIVDKYTTGLQNCYNVKNVSFDQFIDPESTNNLELKKCVGSLINVGVMKYWSDNLESKTIDNLNETMECMTKLPLNSNTTTRFPLRAAECAGERSWWKPDIFGTRN.

Positions 1-25 (MKVTLLLLLIAVLLLLLIFMKVCKQ) are cleaved as a signal peptide.

This is an uncharacterized protein from Invertebrate iridescent virus 6 (IIV-6).